A 103-amino-acid chain; its full sequence is MAKKSLIQREKKRHKLEQKYHLIRRSLKKKIRSKVSPLSLSEKTKMQEKLQSLPRNSAPTRLHRRCFLTGRPRANYRDFGLSGHILREMVYACLLPGATRSSW.

The segment at 34 to 56 is disordered; the sequence is KVSPLSLSEKTKMQEKLQSLPRN.

The protein belongs to the universal ribosomal protein uS14 family. As to quaternary structure, part of the 30S ribosomal subunit.

Its subcellular location is the plastid. The protein localises to the chloroplast. Functionally, binds 16S rRNA, required for the assembly of 30S particles. The protein is Small ribosomal subunit protein uS14c of Saccharum hybrid (Sugarcane).